Reading from the N-terminus, the 333-residue chain is Pantothenate synthetase (333 aa).

27-34 (MGALHEGH) contributes to the ATP binding site. The active-site Proton donor is His34. Gln61 contacts (R)-pantoate. Position 61 (Gln61) interacts with beta-alanine. Position 148–151 (148–151 (GQKD)) interacts with ATP. (R)-pantoate is bound at residue Gln154. Residues Val177 and 185–188 (LSSR) each bind ATP.

This sequence belongs to the pantothenate synthetase family. Homodimer.

The protein localises to the cytoplasm. It catalyses the reaction (R)-pantoate + beta-alanine + ATP = (R)-pantothenate + AMP + diphosphate + H(+). Its pathway is cofactor biosynthesis; (R)-pantothenate biosynthesis; (R)-pantothenate from (R)-pantoate and beta-alanine: step 1/1. In terms of biological role, catalyzes the condensation of pantoate with beta-alanine in an ATP-dependent reaction via a pantoyl-adenylate intermediate. In Streptomyces avermitilis (strain ATCC 31267 / DSM 46492 / JCM 5070 / NBRC 14893 / NCIMB 12804 / NRRL 8165 / MA-4680), this protein is Pantothenate synthetase.